Here is a 125-residue protein sequence, read N- to C-terminus: Morphine 6-dehydrogenase (125 aa).

NADP(+) is bound by residues 9–18 and 74–111; these read GHSIPVLGFI and SALG…IERE.

It belongs to the aldo/keto reductase family. Monomer. The N-terminus is blocked.

Its subcellular location is the cytoplasm. It carries out the reaction morphine + NAD(+) = morphinone + NADH + H(+). The enzyme catalyses morphine + NADP(+) = morphinone + NADPH + H(+). With respect to regulation, strongly inhibited by sulfhydryl reagents and quercetin, but not by pyrazole, barbital and indomethacine. In terms of biological role, catalyzes the dehydrogenation of morphine to morphinone. Uses both NAD and NADP, but the activity is much greater with NAD than with NADP. In Oryctolagus cuniculus (Rabbit), this protein is Morphine 6-dehydrogenase.